The primary structure comprises 264 residues: Claudin-18 (264 aa).

The Cytoplasmic portion of the chain corresponds to 1–6 (MATTTC). A helical transmembrane segment spans residues 7-27 (QVVGLLLSLLGLAGCIAATGM). At 28 to 80 (DMWSTQDLYDNPVTAVFQYEGLWRSCVQQSSGFTECRPYFTILGLPAMLQAVR) the chain is on the extracellular side. Residues 81–101 (ALMIVGIVLGVIGILVSIFAL) form a helical membrane-spanning segment. Residues 102–122 (KCIRIGSMDDSAKAKMTLTSG) are Cytoplasmic-facing. A helical membrane pass occupies residues 123–143 (ILFIISGICAIIGVSVFANML). Residues 144–176 (VTNFWMSTANMYSGMGGMGGMVQTVQTRYTFGA) are Extracellular-facing. Residues 177 to 197 (ALFVGWVAGGLTLIGGVMMCI) traverse the membrane as a helical segment. Residues 198 to 264 (ACRGLTPDDS…QSHPTKYDYV (67 aa)) lie on the Cytoplasmic side of the membrane. The tract at residues 198 to 264 (ACRGLTPDDS…QSHPTKYDYV (67 aa)) is required for role in regulation of RANKL-induced osteoclast differentiation. At S217 the chain carries Phosphoserine. Residues 241–264 (KKIYDGGARTEDDEQSHPTKYDYV) form a disordered region. Residues 242–264 (KIYDGGARTEDDEQSHPTKYDYV) show a composition bias toward basic and acidic residues.

This sequence belongs to the claudin family. In terms of assembly, interacts with TJP2/ZO-2. Interacts with TJP1/ZO-1. Interacts with YAP1 (phosphorylated); the interaction sequesters YAP1 away from the nucleus and thereby restricts transcription of YAP1 target genes. As to quaternary structure, interacts with CLDN19. Expressed in the lung (at protein level). In terms of tissue distribution, expressed in lung. Expressed in the stomach. As to expression, expressed in lung. Expressed in stomach. Expressed in bone. In terms of tissue distribution, expressed in stomach.

The protein resides in the cell junction. The protein localises to the tight junction. It is found in the cell membrane. It localises to the lateral cell membrane. Its function is as follows. Involved in alveolar fluid homeostasis via regulation of alveolar epithelial tight junction composition and therefore ion transport and solute permeability, potentially via downstream regulation of the actin cytoskeleton organization and beta-2-adrenergic signaling. Required for lung alveolarization and maintenance of the paracellular alveolar epithelial barrier. Acts to maintain epithelial progenitor cell proliferation and organ size, via regulation of YAP1 localization away from the nucleus and thereby restriction of YAP1 target gene transcription. Acts as a negative regulator of RANKL-induced osteoclast differentiation, potentially via relocation of TJP2/ZO-2 away from the nucleus, subsequently involved in bone resorption in response to calcium deficiency. Mediates the osteoprotective effects of estrogen, potentially via acting downstream of estrogen signaling independently of RANKL signaling pathways. Involved in the maintenance of homeostasis of the alveolar microenvironment via regulation of pH and subsequent T-cell activation in the alveolar space, is therefore indirectly involved in limiting C.neoformans infection. Functionally, required for the formation of the gastric paracellular barrier via its role in tight junction formation, thereby involved in the response to gastric acidification. This is Claudin-18 (Cldn18) from Mus musculus (Mouse).